We begin with the raw amino-acid sequence, 482 residues long: ATP-dependent rRNA helicase rrp3 (482 aa).

A disordered region spans residues 1 to 55 (MSSVKRRKTEKNTSSGLKSKQAKEPKEASPLSSPEPTEENQNNEIEEGTEEEEVT). The segment covering 44–53 (EIEEGTEEEE) has biased composition (acidic residues). The short motif at 56 to 84 (KSFKDLGIVDSLCEACDTLGYKAPTPIQR) is the Q motif element. The 172-residue stretch at 87–258 (IPLALQGRDL…RASLKDPLRV (172 aa)) folds into the Helicase ATP-binding domain. 100–107 (AETGSGKT) contacts ATP. The DEAD box motif lies at 206–209 (DEAD). The region spanning 282–430 (HKDTYLIYLL…EYQTVKDEVM (149 aa)) is the Helicase C-terminal domain. Composition is skewed to basic and acidic residues over residues 444–456 (RNEM…DRGK) and 472–482 (RGRDEMDREEG). Residues 444 to 482 (RNEMKNLHEDRGKKGAVLKGRRPANGAKRGRDEMDREEG) form a disordered region.

The protein belongs to the DEAD box helicase family. DDX47/RRP3 subfamily. In terms of assembly, interacts with the SSU processome.

It localises to the nucleus. It carries out the reaction ATP + H2O = ADP + phosphate + H(+). In terms of biological role, ATP-dependent rRNA helicase required for pre-ribosomal RNA processing. Involved in the maturation of the 35S-pre-rRNA and to its cleavage to mature 18S rRNA. The protein is ATP-dependent rRNA helicase rrp3 of Sclerotinia sclerotiorum (strain ATCC 18683 / 1980 / Ss-1) (White mold).